A 263-amino-acid chain; its full sequence is Transcription factor bHLH27 (263 aa).

The span at 32–47 shows a compositional bias: low complexity; that stretch reads EAFSGSGESSSPDGAA. Positions 32-61 are disordered; that stretch reads EAFSGSGESSSPDGAATSPASSKNVVSERN. Over residues 49–58 the composition is skewed to polar residues; sequence SPASSKNVVS. Residues 50 to 99 enclose the bHLH domain; it reads PASSKNVVSERNRRQKLNQRLFALRSVVPNISKLDKASVIKDSIDYMQEL.

In terms of assembly, homodimer. In terms of tissue distribution, expressed constitutively in roots, leaves, stems, and flowers.

Its subcellular location is the nucleus. This Arabidopsis thaliana (Mouse-ear cress) protein is Transcription factor bHLH27 (BHLH27).